The primary structure comprises 123 residues: Histone H2B (123 aa).

The disordered stretch occupies residues Met1–Lys30. Pro2 carries the N-methylproline; partial modification. Lys44 carries the N6-succinyllysine modification. O-linked (GlcNAc) serine glycosylation occurs at Ser110. N6-succinyllysine is present on residues Lys114 and Lys118. Lys118 is covalently cross-linked (Glycyl lysine isopeptide (Lys-Gly) (interchain with G-Cter in ubiquitin)).

This sequence belongs to the histone H2B family. In terms of assembly, the nucleosome is a histone octamer containing two molecules each of H2A, H2B, H3 and H4 assembled in one H3-H4 heterotetramer and two H2A-H2B heterodimers. The octamer wraps approximately 147 bp of DNA. Post-translationally, phosphorylated by the catalytic component of the Dbf4-dependent kinase (DDK) complex Cdc7. In terms of processing, monoubiquitination of Lys-118 by Bre1 gives a specific tag for epigenetic transcriptional activation and is also prerequisite for histone H3 'Lys-4' and 'Lys-79' methylation. Deubiquitination of Lys-118 by the SAGA complex is involved in activating transcription of a large subset of genes. Methylation at Pro-2 increases upon heat shock. Post-translationally, glcNAcylation at Ser-110 promotes monoubiquitination of Lys-118. It fluctuates in response to extracellular glucose, and associates with transcribed genes.

The protein localises to the nucleus. It localises to the chromosome. Functionally, core component of nucleosome. Nucleosomes wrap and compact DNA into chromatin, limiting DNA accessibility to the cellular machineries which require DNA as a template. Histones thereby play a central role in transcription regulation, DNA repair, DNA replication and chromosomal stability. DNA accessibility is regulated via a complex set of post-translational modifications of histones, also called histone code, and nucleosome remodeling. The chain is Histone H2B (His2B) from Drosophila erecta (Fruit fly).